Reading from the N-terminus, the 172-residue chain is Stellate protein CG33238 (172 aa).

The protein belongs to the casein kinase 2 subunit beta family. In terms of assembly, interacts in vitro with the casein kinase 2 alpha subunit (CkII-alpha). The relevance of such interaction is however unclear in vivo. In terms of tissue distribution, probably not expressed in wild-type flies. In males lacking the Y chromosome, it is testis-specific and constitutes the main component of star-shaped crystals.

Its function is as follows. Unknown. In males lacking the Y chromosome, its strong overexpression leads to the appearance of proteinaceous star-shaped crystals in the primary spermatocytes causing meiotic drive, possibly by interfering with normal casein kinase 2 activity. This is Stellate protein CG33238 (Ste:CG33238) from Drosophila melanogaster (Fruit fly).